The chain runs to 307 residues: Replication termination factor 2 (307 aa).

The interval 193 to 296 (AKLEKKTKKP…SSAKRSKEES (104 aa)) is disordered. The segment covering 227 to 241 (GKPEEADPDPREKKS) has biased composition (basic and acidic residues). Ser288 bears the Phosphoserine mark.

The protein belongs to the rtf2 family. In terms of assembly, interacts with DDI2; probably also interacts with DDI1. Undergoes proteasomal degradation, via DDI1 and DDI2. Removal from stalled replisomes and degradation are required for genome stability.

The protein localises to the chromosome. Functionally, replication termination factor which is a component of the elongating replisome. Required for ATR pathway signaling upon DNA damage and has a positive activity during DNA replication. Might function to facilitate fork pausing at replication fork barriers like the rDNA. May be globally required to stimulate ATR signaling after the fork stalls or encounters a lesion. Interacts with nascent DNA. The chain is Replication termination factor 2 from Mus musculus (Mouse).